An 81-amino-acid chain; its full sequence is Prophage excisionase-like protein (81 aa).

The protein to lambdoid phages excisionases.

This chain is Prophage excisionase-like protein (xisE), found in Escherichia coli (strain K12).